Here is a 383-residue protein sequence, read N- to C-terminus: Nuclear hormone receptor family member nhr-217 (383 aa).

Residues 53 to 127 (IPACPVCDVP…AGLQRDYVRQ (75 aa)) constitute a DNA-binding region (nuclear receptor). 2 consecutive NR C4-type zinc fingers follow at residues 56 to 77 (CPVC…CAAC) and 93 to 109 (CKRE…CRAC). The NR LBD domain occupies 172–383 (ILKVSNSSLF…KLYVQIGIPF (212 aa)).

It belongs to the nuclear hormone receptor family.

The protein resides in the nucleus. Orphan nuclear receptor. This is Nuclear hormone receptor family member nhr-217 (nhr-217) from Caenorhabditis elegans.